A 492-amino-acid chain; its full sequence is Protein nucleotidyltransferase YdiU (492 aa).

The ATP site is built by Gly-88, Gly-90, Arg-91, Lys-111, Asp-123, Gly-124, Arg-174, and Arg-181. The Proton acceptor role is filled by Asp-250. 2 residues coordinate Mg(2+): Asn-251 and Asp-260. Asp-260 is an ATP binding site.

This sequence belongs to the SELO family. It depends on Mg(2+) as a cofactor. The cofactor is Mn(2+).

The catalysed reaction is L-seryl-[protein] + ATP = 3-O-(5'-adenylyl)-L-seryl-[protein] + diphosphate. It catalyses the reaction L-threonyl-[protein] + ATP = 3-O-(5'-adenylyl)-L-threonyl-[protein] + diphosphate. The enzyme catalyses L-tyrosyl-[protein] + ATP = O-(5'-adenylyl)-L-tyrosyl-[protein] + diphosphate. It carries out the reaction L-histidyl-[protein] + UTP = N(tele)-(5'-uridylyl)-L-histidyl-[protein] + diphosphate. The catalysed reaction is L-seryl-[protein] + UTP = O-(5'-uridylyl)-L-seryl-[protein] + diphosphate. It catalyses the reaction L-tyrosyl-[protein] + UTP = O-(5'-uridylyl)-L-tyrosyl-[protein] + diphosphate. Its function is as follows. Nucleotidyltransferase involved in the post-translational modification of proteins. It can catalyze the addition of adenosine monophosphate (AMP) or uridine monophosphate (UMP) to a protein, resulting in modifications known as AMPylation and UMPylation. The sequence is that of Protein nucleotidyltransferase YdiU from Rhodopseudomonas palustris (strain ATCC BAA-98 / CGA009).